An 887-amino-acid polypeptide reads, in one-letter code: Amyloid-beta-like protein (887 aa).

An N-terminal signal peptide occupies residues 1-27 (MCAALRRNLLLRSLWVVLAIGTAQVQA). The Extracellular segment spans residues 28 to 813 (ASPRWEPQIA…HAAKEGRNVY (786 aa)). A GFLD subdomain region spans residues 30–133 (PRWEPQIAVL…KPFRCLGPFQ (104 aa)). The E1 domain occupies 30–199 (PRWEPQIAVL…SGVEFVCCPK (170 aa)). Intrachain disulfides connect Cys40-Cys70, Cys81-Cys128, Cys106-Cys116, Cys143-Cys197, Cys154-Cys184, and Cys168-Cys196. Residues 141 to 199 (EGCLFDHIHNASRCWPFVRWNQTGAAACQERGMQMRSFAMLLPCGISVFSGVEFVCCPK) are cuBD subdomain. 2 N-linked (GlcNAc...) asparagine glycosylation sites follow: Asn150 and Asn161. 2 disordered regions span residues 225–365 (NDEL…STPQ) and 377–396 (NSGNSGTGAGAPPSTAQPTS). Residues Asn237 and Asn240 are each glycosylated (N-linked (GlcNAc...) asparagine). The span at 246-267 (NEDDLDDEDDLMGDDEEDDMVA) shows a compositional bias: acidic residues. A compositionally biased stretch (low complexity) spans 268 to 292 (DEAATAGGSPNTGSSGDSNSGSLDD). The span at 293-321 (INAEYDSGEEGDNYEEDGAGSESEAEVEA) shows a compositional bias: acidic residues. Over residues 329–352 (AKVVSLKSDSSSPSSAPVAPAPEK) the composition is skewed to low complexity. Residues 395 to 597 (TSDPYFTHFD…AKIAQLMNDY (203 aa)) form the E2 domain. An N-linked (GlcNAc...) asparagine glycan is attached at Asn574. Residues 675 to 743 (KSQVAEQQSQ…TEYGEATVSS (69 aa)) form a disordered region. Positions 681-699 (QQSQPTQSSTQSQAQQQQQ) are enriched in low complexity. The helical transmembrane segment at 814 to 834 (FTLSFAGIALMAAVFVGVAVA) threads the bilayer. The Cytoplasmic segment spans residues 835 to 887 (KWRTSRSPHAQGFIEVDQNVTTHHPIVREEKIVPNMQINGYENPTYKYFEVKE). The short motif at 875–880 (YENPTY) is the YENPXY motif element.

It belongs to the APP family. Interacts (via the intracellular domain, ICD) with APP-BP1. As to expression, expressed in postmitotic neurons in the central and peripheral nervous systems. Within the nervous system, transcripts are not observed in neuroblasts, newly generated neurons and at least one class of presumed glial cells.

The protein resides in the membrane. In terms of biological role, during development, plays a role in the regulation of the neddylation pathway. Appl and APP-BP1 interact antagonistically during development. The chain is Amyloid-beta-like protein (Appl) from Drosophila melanogaster (Fruit fly).